Here is a 284-residue protein sequence, read N- to C-terminus: Rubber cis-polyprenyltransferase HRT2 (284 aa).

The active site involves D41.

Belongs to the UPP synthase family. In terms of tissue distribution, predominantly expressed in latex.

It catalyses the reaction (cis-prenyl)(n)-diphosphate + isopentenyl diphosphate = (cis-prenyl)(n+1)-diphosphate + diphosphate. In terms of biological role, proposed to be involved in rubber biosynthesis as a particle-bound rubber transferase responsible for the cis-1,4-polymerization of isoprene subunits. Probably requires additional factors for the production of high molecular mass rubber. The chain is Rubber cis-polyprenyltransferase HRT2 (HRT2) from Hevea brasiliensis (Para rubber tree).